A 366-amino-acid polypeptide reads, in one-letter code: Histidinol-phosphate aminotransferase (366 aa).

Lys-228 bears the N6-(pyridoxal phosphate)lysine mark.

It belongs to the class-II pyridoxal-phosphate-dependent aminotransferase family. Histidinol-phosphate aminotransferase subfamily. In terms of assembly, homodimer. Pyridoxal 5'-phosphate serves as cofactor.

It catalyses the reaction L-histidinol phosphate + 2-oxoglutarate = 3-(imidazol-4-yl)-2-oxopropyl phosphate + L-glutamate. Its pathway is amino-acid biosynthesis; L-histidine biosynthesis; L-histidine from 5-phospho-alpha-D-ribose 1-diphosphate: step 7/9. The polypeptide is Histidinol-phosphate aminotransferase (Corynebacterium diphtheriae (strain ATCC 700971 / NCTC 13129 / Biotype gravis)).